The following is a 184-amino-acid chain: Acireductone dioxygenase (184 aa).

4 residues coordinate Fe(2+): His-87, His-89, Glu-93, and His-137. 4 residues coordinate Ni(2+): His-87, His-89, Glu-93, and His-137.

This sequence belongs to the acireductone dioxygenase (ARD) family. It depends on Fe(2+) as a cofactor. Ni(2+) serves as cofactor.

The protein localises to the cytoplasm. The protein resides in the nucleus. The enzyme catalyses 1,2-dihydroxy-5-(methylsulfanyl)pent-1-en-3-one + O2 = 4-methylsulfanyl-2-oxobutanoate + formate + 2 H(+). The catalysed reaction is 1,2-dihydroxy-5-(methylsulfanyl)pent-1-en-3-one + O2 = 3-(methylsulfanyl)propanoate + CO + formate + 2 H(+). The protein operates within amino-acid biosynthesis; L-methionine biosynthesis via salvage pathway; L-methionine from S-methyl-5-thio-alpha-D-ribose 1-phosphate: step 5/6. Catalyzes 2 different reactions between oxygen and the acireductone 1,2-dihydroxy-3-keto-5-methylthiopentene (DHK-MTPene) depending upon the metal bound in the active site. Fe-containing acireductone dioxygenase (Fe-ARD) produces formate and 2-keto-4-methylthiobutyrate (KMTB), the alpha-ketoacid precursor of methionine in the methionine recycle pathway. Ni-containing acireductone dioxygenase (Ni-ARD) produces methylthiopropionate, carbon monoxide and formate, and does not lie on the methionine recycle pathway. The polypeptide is Acireductone dioxygenase (Ciona intestinalis (Transparent sea squirt)).